The primary structure comprises 359 residues: Alanine racemase, biosynthetic (359 aa).

K34 acts as the Proton acceptor; specific for D-alanine in catalysis. K34 carries the N6-(pyridoxal phosphate)lysine modification. R129 is a substrate binding site. Y255 functions as the Proton acceptor; specific for L-alanine in the catalytic mechanism. M303 lines the substrate pocket.

The protein belongs to the alanine racemase family. It depends on pyridoxal 5'-phosphate as a cofactor.

It carries out the reaction L-alanine = D-alanine. It functions in the pathway amino-acid biosynthesis; D-alanine biosynthesis; D-alanine from L-alanine: step 1/1. It participates in cell wall biogenesis; peptidoglycan biosynthesis. Its function is as follows. Catalyzes the interconversion of L-alanine and D-alanine. Provides the D-alanine required for cell wall biosynthesis. This Escherichia coli O157:H7 protein is Alanine racemase, biosynthetic (alr).